The following is a 159-amino-acid chain: Urease accessory protein UreE (159 aa).

The protein belongs to the UreE family.

Its subcellular location is the cytoplasm. Functionally, involved in urease metallocenter assembly. Binds nickel. Probably functions as a nickel donor during metallocenter assembly. This is Urease accessory protein UreE from Acinetobacter baylyi (strain ATCC 33305 / BD413 / ADP1).